Here is a 489-residue protein sequence, read N- to C-terminus: 3-octaprenyl-4-hydroxybenzoate carboxy-lyase (489 aa).

Position 172 (Asn172) interacts with Mn(2+). Residues 175 to 177 (IYR), 189 to 191 (RWL), and 194 to 195 (RG) each bind prenylated FMN. Glu238 provides a ligand contact to Mn(2+). Asp287 (proton donor) is an active-site residue.

The protein belongs to the UbiD family. In terms of assembly, homohexamer. Requires prenylated FMN as cofactor. It depends on Mn(2+) as a cofactor.

The protein resides in the cell membrane. The enzyme catalyses a 4-hydroxy-3-(all-trans-polyprenyl)benzoate + H(+) = a 2-(all-trans-polyprenyl)phenol + CO2. It functions in the pathway cofactor biosynthesis; ubiquinone biosynthesis. In terms of biological role, catalyzes the decarboxylation of 3-octaprenyl-4-hydroxy benzoate to 2-octaprenylphenol, an intermediate step in ubiquinone biosynthesis. This Tolumonas auensis (strain DSM 9187 / NBRC 110442 / TA 4) protein is 3-octaprenyl-4-hydroxybenzoate carboxy-lyase.